The chain runs to 682 residues: MANSARDILVTCALPYANGAIHLGHLLEHIQADIWVRFQRMRGHKVHFICADDAHGTPIMLNADKLGITPEALIARSKADHVADFEGFNISYDNYHSTHSPENEALTAEMYKKLRANGFIKSRTISQLFDPEKGMFLPDRFVKGTCPKCKAEDQYGDNCEVCSSTYSPTELINPRSVVSGATPVLKESEHFFFDLPAFEGMLKAWIKSGSLQPEIANKMQEWFESGLQQWDISRDAPYFGFKIPDTEDKYFYVWLDAPIGYMASFKNLCDKTGLNFDDFWKKDSSAELYHFIGKDIVYFHSLFWPAMLDGCDLRKPTNVFAHGYVTVNGVKMSKSRGTFIQASTYLRHLAPEYLRYYYAAKLNNRIEDLDLNLEDFVQRLNADVVNKFVNLASRSAGFITKRFDGKLSAEIAEPELLAEFVEKAAQIATYYEEREFGKVVREVMQLADKANKYIDDKAPWVMAKEEGREAELQAVCSMALQLFRVLAIYLKPVIPQIIARAEAFLQDELTWESLNRPLLNHAILPFKALAQRLDPKQIEAIVNETKEQFVAQQALEQKNSAKAEPASQVEPIAETISIEDFAKLDLRVAKVMKCEAVPESNKLLRFELDLGDHTRQVFSGIKEAYNNPAELEGRFVVVIANLAPRKMRFGVSEGMILSAGTGGADLFLLNADQGVKPGMQVK.

The 'HIGH' region motif lies at 15 to 25 (PYANGAIHLGH). The Zn(2+) site is built by Cys-146, Cys-149, Cys-159, and Cys-162. The 'KMSKS' region signature appears at 331-335 (KMSKS). Lys-334 is an ATP binding site. Positions 580–682 (DFAKLDLRVA…QGVKPGMQVK (103 aa)) constitute a tRNA-binding domain.

This sequence belongs to the class-I aminoacyl-tRNA synthetase family. MetG type 1 subfamily. Homodimer. It depends on Zn(2+) as a cofactor.

Its subcellular location is the cytoplasm. It carries out the reaction tRNA(Met) + L-methionine + ATP = L-methionyl-tRNA(Met) + AMP + diphosphate. Is required not only for elongation of protein synthesis but also for the initiation of all mRNA translation through initiator tRNA(fMet) aminoacylation. The chain is Methionine--tRNA ligase from Pasteurella multocida (strain Pm70).